Here is a 246-residue protein sequence, read N- to C-terminus: U11/U12 small nuclear ribonucleoprotein 35 kDa protein (246 aa).

The 79-residue stretch at 51–129 (LTLFVARLNL…HEIFVDYELE (79 aa)) folds into the RRM domain. Residue Lys172 forms a Glycyl lysine isopeptide (Lys-Gly) (interchain with G-Cter in SUMO2) linkage. The tract at residues 187 to 217 (SRSRERHWDSRTRDRDHDRGREKRWQEREPT) is disordered. The span at 192-217 (RHWDSRTRDRDHDRGREKRWQEREPT) shows a compositional bias: basic and acidic residues.

Component of the U11/U12 snRNPs that are part of the U12-type spliceosome. In terms of tissue distribution, expressed in heart, liver, skeletal muscle and pancreas.

The protein localises to the nucleus. The polypeptide is U11/U12 small nuclear ribonucleoprotein 35 kDa protein (SNRNP35) (Homo sapiens (Human)).